We begin with the raw amino-acid sequence, 474 residues long: Serine/threonine-protein kinase ksp1 (474 aa).

The 272-residue stretch at 9–280 (YKVERPLNKG…EAVLAVTKWT (272 aa)) folds into the Protein kinase domain. ATP contacts are provided by residues 15–23 (LNKGSYGTV) and lysine 43. Aspartate 137 (proton acceptor) is an active-site residue. The segment at 345 to 373 (VDENISTSSSPRSPASLAPVNNSERSYDS) is disordered. Residues 350-363 (STSSSPRSPASLAP) are compositionally biased toward low complexity. Phosphoserine occurs at positions 353, 354, 357, 378, 404, and 413.

The protein belongs to the protein kinase superfamily. Ser/Thr protein kinase family.

It is found in the cytoplasm. Its subcellular location is the nucleus. The enzyme catalyses L-seryl-[protein] + ATP = O-phospho-L-seryl-[protein] + ADP + H(+). It carries out the reaction L-threonyl-[protein] + ATP = O-phospho-L-threonyl-[protein] + ADP + H(+). In Schizosaccharomyces pombe (strain 972 / ATCC 24843) (Fission yeast), this protein is Serine/threonine-protein kinase ksp1 (ksp1).